A 243-amino-acid polypeptide reads, in one-letter code: Cell division protein ZipA (243 aa).

Over methionine 1–valine 4 the chain is Periplasmic. Residues threonine 5 to phenylalanine 25 form a helical membrane-spanning segment. Residues serine 26 to tryptophan 243 lie on the Cytoplasmic side of the membrane. The segment at alanine 32–lysine 89 is disordered. Residues lysine 38 to proline 49 show a composition bias toward basic and acidic residues.

It belongs to the ZipA family. In terms of assembly, interacts with FtsZ via their C-terminal domains.

It localises to the cell inner membrane. In terms of biological role, essential cell division protein that stabilizes the FtsZ protofilaments by cross-linking them and that serves as a cytoplasmic membrane anchor for the Z ring. Also required for the recruitment to the septal ring of downstream cell division proteins. In Xylella fastidiosa (strain Temecula1 / ATCC 700964), this protein is Cell division protein ZipA.